The following is a 115-amino-acid chain: UPF0102 protein NMCC_2054 (115 aa).

Belongs to the UPF0102 family.

The chain is UPF0102 protein NMCC_2054 from Neisseria meningitidis serogroup C (strain 053442).